The chain runs to 271 residues: Phosphate import ATP-binding protein PstB (271 aa).

Positions 24–266 (MIGNDVSVYY…PDDQRTQDYI (243 aa)) constitute an ABC transporter domain. 56 to 63 (GPSGCGKS) is a binding site for ATP.

The protein belongs to the ABC transporter superfamily. Phosphate importer (TC 3.A.1.7) family. In terms of assembly, the complex is composed of two ATP-binding proteins (PstB), two transmembrane proteins (PstC and PstA) and a solute-binding protein (PstS).

Its subcellular location is the cell inner membrane. It catalyses the reaction phosphate(out) + ATP + H2O = ADP + 2 phosphate(in) + H(+). Its function is as follows. Part of the ABC transporter complex PstSACB involved in phosphate import. Responsible for energy coupling to the transport system. This is Phosphate import ATP-binding protein PstB from Rhizobium meliloti (strain 1021) (Ensifer meliloti).